An 84-amino-acid polypeptide reads, in one-letter code: ATP synthase subunit c (84 aa).

A run of 2 helical transmembrane segments spans residues 9–29 and 54–74; these read IIGASILLAFAALGTAIGFAI and IVAGLLDAIAMIAVGISLLFI.

The protein belongs to the ATPase C chain family. As to quaternary structure, F-type ATPases have 2 components, F(1) - the catalytic core - and F(0) - the membrane proton channel. F(1) has five subunits: alpha(3), beta(3), gamma(1), delta(1), epsilon(1). F(0) has three main subunits: a(1), b(2) and c(10-14). The alpha and beta chains form an alternating ring which encloses part of the gamma chain. F(1) is attached to F(0) by a central stalk formed by the gamma and epsilon chains, while a peripheral stalk is formed by the delta and b chains.

Its subcellular location is the cell inner membrane. F(1)F(0) ATP synthase produces ATP from ADP in the presence of a proton or sodium gradient. F-type ATPases consist of two structural domains, F(1) containing the extramembraneous catalytic core and F(0) containing the membrane proton channel, linked together by a central stalk and a peripheral stalk. During catalysis, ATP synthesis in the catalytic domain of F(1) is coupled via a rotary mechanism of the central stalk subunits to proton translocation. Functionally, key component of the F(0) channel; it plays a direct role in translocation across the membrane. A homomeric c-ring of between 10-14 subunits forms the central stalk rotor element with the F(1) delta and epsilon subunits. The sequence is that of ATP synthase subunit c from Haemophilus influenzae (strain PittEE).